We begin with the raw amino-acid sequence, 350 residues long: tRNA pseudouridine synthase D (350 aa).

A substrate-binding site is contributed by Phe-27. Asp-80 functions as the Nucleophile in the catalytic mechanism. Position 129 (Asn-129) interacts with substrate. The 149-residue stretch at 155 to 303 folds into the TRUD domain; sequence GVPNYFGVQR…VDTTRRAINL (149 aa). Phe-329 contributes to the substrate binding site.

The protein belongs to the pseudouridine synthase TruD family.

The catalysed reaction is uridine(13) in tRNA = pseudouridine(13) in tRNA. Its function is as follows. Responsible for synthesis of pseudouridine from uracil-13 in transfer RNAs. The polypeptide is tRNA pseudouridine synthase D (Proteus mirabilis (strain HI4320)).